The primary structure comprises 452 residues: Pup--protein ligase (452 aa).

Residue Glu-9 participates in Mg(2+) binding. ATP is bound at residue Arg-53. Residue Tyr-55 coordinates Mg(2+). Asp-57 (proton acceptor) is an active-site residue. Residue Glu-63 participates in Mg(2+) binding. Residues Thr-66 and Trp-419 each coordinate ATP.

The protein belongs to the Pup ligase/Pup deamidase family. Pup-conjugating enzyme subfamily.

The enzyme catalyses ATP + [prokaryotic ubiquitin-like protein]-L-glutamate + [protein]-L-lysine = ADP + phosphate + N(6)-([prokaryotic ubiquitin-like protein]-gamma-L-glutamyl)-[protein]-L-lysine.. Its pathway is protein degradation; proteasomal Pup-dependent pathway. The protein operates within protein modification; protein pupylation. Functionally, catalyzes the covalent attachment of the prokaryotic ubiquitin-like protein modifier Pup to the proteasomal substrate proteins, thereby targeting them for proteasomal degradation. This tagging system is termed pupylation. The ligation reaction involves the side-chain carboxylate of the C-terminal glutamate of Pup and the side-chain amino group of a substrate lysine. The chain is Pup--protein ligase from Rhodococcus jostii (strain RHA1).